The sequence spans 160 residues: Keratin-associated protein 9-6 (160 aa).

A run of 16 repeats spans residues 4-8 (CCSPG), 13-17 (CCRTT), 18-22 (CCRTT), 37-41 (CCQPS), 42-46 (CCVSS), 47-51 (CCQPY), 56-60 (CCQNT), 61-65 (CCRTT), 66-70 (CCQPT), 75-79 (CCQPS), 80-84 (CCSTP), 90-94 (CCGSS), 95-99 (CCGQT), 140-144 (CCQPC), 149-153 (CCVSS), and 154-158 (CCQHS). Residues 4-158 (CCSPGCQPTC…CCVSSCCQHS (155 aa)) are 16 X 5 AA repeats of C-C-[GSVRQ]-[QTSPHN]-[TPSGYC].

It belongs to the KRTAP type 9 family. Interacts with hair keratins.

In the hair cortex, hair keratin intermediate filaments are embedded in an interfilamentous matrix, consisting of hair keratin-associated proteins (KRTAP), which are essential for the formation of a rigid and resistant hair shaft through their extensive disulfide bond cross-linking with abundant cysteine residues of hair keratins. The matrix proteins include the high-sulfur and high-glycine-tyrosine keratins. In Homo sapiens (Human), this protein is Keratin-associated protein 9-6.